A 263-amino-acid chain; its full sequence is Acyl-[acyl-carrier-protein]--UDP-N-acetylglucosamine O-acyltransferase (263 aa).

It belongs to the transferase hexapeptide repeat family. LpxA subfamily. As to quaternary structure, homotrimer.

The protein localises to the cytoplasm. The enzyme catalyses a (3R)-hydroxyacyl-[ACP] + UDP-N-acetyl-alpha-D-glucosamine = a UDP-3-O-[(3R)-3-hydroxyacyl]-N-acetyl-alpha-D-glucosamine + holo-[ACP]. It participates in glycolipid biosynthesis; lipid IV(A) biosynthesis; lipid IV(A) from (3R)-3-hydroxytetradecanoyl-[acyl-carrier-protein] and UDP-N-acetyl-alpha-D-glucosamine: step 1/6. Its function is as follows. Involved in the biosynthesis of lipid A, a phosphorylated glycolipid that anchors the lipopolysaccharide to the outer membrane of the cell. The chain is Acyl-[acyl-carrier-protein]--UDP-N-acetylglucosamine O-acyltransferase from Xanthomonas euvesicatoria pv. vesicatoria (strain 85-10) (Xanthomonas campestris pv. vesicatoria).